A 360-amino-acid polypeptide reads, in one-letter code: NAD(P)H-quinone oxidoreductase subunit 1, chloroplastic (360 aa).

Transmembrane regions (helical) follow at residues 29–49 (WIPLPILVVIVGATIGVLVIV), 96–116 (IWLFTLGPALVVIPVFLAYLV), 128–148 (ISLGVFFWIAISSIAPIGLLM), 166–186 (AAQAISYEIPLSLCVLAICLL), 204–224 (ILGWNVWRQPIGFVSFLIAAL), 255–277 (GLFYVGSYVNLLLSSLFATILYL), 297–317 (IFAAFLGIGMTLLKAYLFIFL), and 333–353 (LLDLGWKFLLPISLGNLLLTA).

The protein belongs to the complex I subunit 1 family. NDH is composed of at least 16 different subunits, 5 of which are encoded in the nucleus.

Its subcellular location is the plastid. It is found in the chloroplast thylakoid membrane. The catalysed reaction is a plastoquinone + NADH + (n+1) H(+)(in) = a plastoquinol + NAD(+) + n H(+)(out). It catalyses the reaction a plastoquinone + NADPH + (n+1) H(+)(in) = a plastoquinol + NADP(+) + n H(+)(out). Functionally, NDH shuttles electrons from NAD(P)H:plastoquinone, via FMN and iron-sulfur (Fe-S) centers, to quinones in the photosynthetic chain and possibly in a chloroplast respiratory chain. The immediate electron acceptor for the enzyme in this species is believed to be plastoquinone. Couples the redox reaction to proton translocation, and thus conserves the redox energy in a proton gradient. The polypeptide is NAD(P)H-quinone oxidoreductase subunit 1, chloroplastic (Chlorokybus atmophyticus (Soil alga)).